The chain runs to 175 residues: Transcription factor E (175 aa).

The 85-residue stretch at 4-88 folds into the HTH TFE/IIEalpha-type domain; it reads AEDLFINLAK…YWKPNIDQIN (85 aa).

It belongs to the TFE family. As to quaternary structure, monomer. Interaction with RNA polymerase subunits RpoF and RpoE is necessary for Tfe stimulatory transcription activity. Able to interact with Tbp and RNA polymerase in the absence of DNA promoter. Interacts both with the preinitiation and elongation complexes.

Its function is as follows. Transcription factor that plays a role in the activation of archaeal genes transcribed by RNA polymerase. Facilitates transcription initiation by enhancing TATA-box recognition by TATA-box-binding protein (Tbp), and transcription factor B (Tfb) and RNA polymerase recruitment. Not absolutely required for transcription in vitro, but particularly important in cases where Tbp or Tfb function is not optimal. It dynamically alters the nucleic acid-binding properties of RNA polymerases by stabilizing the initiation complex and destabilizing elongation complexes. Seems to translocate with the RNA polymerase following initiation and acts by binding to the non template strand of the transcription bubble in elongation complexes. The sequence is that of Transcription factor E from Saccharolobus islandicus (strain Y.N.15.51 / Yellowstone #2) (Sulfolobus islandicus).